Here is a 226-residue protein sequence, read N- to C-terminus: Teichuronic acid biosynthesis protein TuaF (226 aa).

The next 2 membrane-spanning stretches (helical) occupy residues 15 to 35 (NIIWIIAVPIILGAAGYILPS) and 202 to 222 (VLGVMIGLTIAFMFVVIPEFF).

The protein localises to the cell membrane. It participates in cell wall biogenesis; teichuronic acid biosynthesis. In Bacillus subtilis (strain 168), this protein is Teichuronic acid biosynthesis protein TuaF (tuaF).